The primary structure comprises 284 residues: Pantothenate synthetase (284 aa).

An ATP-binding site is contributed by 34–41 (MGALHAGH). H41 serves as the catalytic Proton donor. Q65 provides a ligand contact to (R)-pantoate. Residue Q65 coordinates beta-alanine. Position 151–154 (151–154 (GEKD)) interacts with ATP. Residue Q157 coordinates (R)-pantoate. Residues L180 and 188 to 191 (MSSR) contribute to the ATP site.

Belongs to the pantothenate synthetase family. Homodimer.

It is found in the cytoplasm. The enzyme catalyses (R)-pantoate + beta-alanine + ATP = (R)-pantothenate + AMP + diphosphate + H(+). The protein operates within cofactor biosynthesis; (R)-pantothenate biosynthesis; (R)-pantothenate from (R)-pantoate and beta-alanine: step 1/1. Functionally, catalyzes the condensation of pantoate with beta-alanine in an ATP-dependent reaction via a pantoyl-adenylate intermediate. This Paramagnetospirillum magneticum (strain ATCC 700264 / AMB-1) (Magnetospirillum magneticum) protein is Pantothenate synthetase.